The following is a 273-amino-acid chain: Large ribosomal subunit protein uL2 (273 aa).

Residues 221-263 (RGTAMNPVDHPHGGGEGRNFGKHPVTPWGVQTKGKKTRHNKRT) form a disordered region. The span at 253-263 (KGKKTRHNKRT) shows a compositional bias: basic residues.

Belongs to the universal ribosomal protein uL2 family. In terms of assembly, part of the 50S ribosomal subunit. Forms a bridge to the 30S subunit in the 70S ribosome.

One of the primary rRNA binding proteins. Required for association of the 30S and 50S subunits to form the 70S ribosome, for tRNA binding and peptide bond formation. It has been suggested to have peptidyltransferase activity; this is somewhat controversial. Makes several contacts with the 16S rRNA in the 70S ribosome. This Histophilus somni (strain 2336) (Haemophilus somnus) protein is Large ribosomal subunit protein uL2.